A 287-amino-acid chain; its full sequence is Phosphatidylserine decarboxylase proenzyme (287 aa).

Active-site charge relay system; for autoendoproteolytic cleavage activity residues include Asp89, His146, and Ser252. Ser252 acts as the Schiff-base intermediate with substrate; via pyruvic acid; for decarboxylase activity in catalysis. Ser252 carries the post-translational modification Pyruvic acid (Ser); by autocatalysis.

It belongs to the phosphatidylserine decarboxylase family. PSD-B subfamily. Prokaryotic type I sub-subfamily. As to quaternary structure, heterodimer of a large membrane-associated beta subunit and a small pyruvoyl-containing alpha subunit. It depends on pyruvate as a cofactor. Post-translationally, is synthesized initially as an inactive proenzyme. Formation of the active enzyme involves a self-maturation process in which the active site pyruvoyl group is generated from an internal serine residue via an autocatalytic post-translational modification. Two non-identical subunits are generated from the proenzyme in this reaction, and the pyruvate is formed at the N-terminus of the alpha chain, which is derived from the carboxyl end of the proenzyme. The autoendoproteolytic cleavage occurs by a canonical serine protease mechanism, in which the side chain hydroxyl group of the serine supplies its oxygen atom to form the C-terminus of the beta chain, while the remainder of the serine residue undergoes an oxidative deamination to produce ammonia and the pyruvoyl prosthetic group on the alpha chain. During this reaction, the Ser that is part of the protease active site of the proenzyme becomes the pyruvoyl prosthetic group, which constitutes an essential element of the active site of the mature decarboxylase.

The protein localises to the cell membrane. The enzyme catalyses a 1,2-diacyl-sn-glycero-3-phospho-L-serine + H(+) = a 1,2-diacyl-sn-glycero-3-phosphoethanolamine + CO2. Its pathway is phospholipid metabolism; phosphatidylethanolamine biosynthesis; phosphatidylethanolamine from CDP-diacylglycerol: step 2/2. In terms of biological role, catalyzes the formation of phosphatidylethanolamine (PtdEtn) from phosphatidylserine (PtdSer). This chain is Phosphatidylserine decarboxylase proenzyme, found in Shewanella sediminis (strain HAW-EB3).